Consider the following 26-residue polypeptide: PRKCH upstream open reading frame 2 (26 aa).

As to quaternary structure, interacts with protein kinase C eta as well as other protein kinases including PRKCD, PRKCQ and PRKCE but not with PRKCG or PRKCZ; the interactions lead to inhibition of kinase activity.

Functionally, product of an upstream open reading frame (ORF) of PRKCH which regulates translation of the downstream protein kinase C eta (PKC-eta) ORF. Functions as a repressive element that maintains low basal levels of PKC-eta in growing cells but enhances its expression during stress conditions induced by amino acid starvation in a EIF2AK4/GCN2-dependent manner. In addition to its role in regulating PKC-eta translation, also inhibits the kinase activity of PKC-eta as well as other protein kinases including PRKCD, PRKCQ and PRKCE but not PRKCA, PRKCG or PRKCZ. The chain is PRKCH upstream open reading frame 2 from Homo sapiens (Human).